Consider the following 598-residue polypeptide: Aspartate--tRNA(Asp/Asn) ligase (598 aa).

Glutamate 177 lines the L-aspartate pocket. Positions 201–204 (QLFK) are aspartate. Residue arginine 223 coordinates L-aspartate. Residues 223–225 (RDE) and glutamine 232 each bind ATP. Histidine 456 is an L-aspartate binding site. Glutamate 493 provides a ligand contact to ATP. Arginine 500 serves as a coordination point for L-aspartate. 545–548 (GVDR) contacts ATP.

Belongs to the class-II aminoacyl-tRNA synthetase family. Type 1 subfamily. In terms of assembly, homodimer.

It localises to the cytoplasm. It carries out the reaction tRNA(Asx) + L-aspartate + ATP = L-aspartyl-tRNA(Asx) + AMP + diphosphate. Aspartyl-tRNA synthetase with relaxed tRNA specificity since it is able to aspartylate not only its cognate tRNA(Asp) but also tRNA(Asn). Reaction proceeds in two steps: L-aspartate is first activated by ATP to form Asp-AMP and then transferred to the acceptor end of tRNA(Asp/Asn). The polypeptide is Aspartate--tRNA(Asp/Asn) ligase (Prochlorococcus marinus subsp. pastoris (strain CCMP1986 / NIES-2087 / MED4)).